We begin with the raw amino-acid sequence, 1318 residues long: DNA-directed RNA polymerase subunit beta' (1318 aa).

4 residues coordinate Zn(2+): Cys221, Cys295, Cys302, and Cys305.

This sequence belongs to the RNA polymerase beta' chain family. RpoC2 subfamily. In cyanobacteria the RNAP catalytic core is composed of 2 alpha, 1 beta, 1 beta', 1 gamma and 1 omega subunit. When a sigma factor is associated with the core the holoenzyme is formed, which can initiate transcription. It depends on Zn(2+) as a cofactor.

The catalysed reaction is RNA(n) + a ribonucleoside 5'-triphosphate = RNA(n+1) + diphosphate. In terms of biological role, DNA-dependent RNA polymerase catalyzes the transcription of DNA into RNA using the four ribonucleoside triphosphates as substrates. The sequence is that of DNA-directed RNA polymerase subunit beta' from Synechococcus sp. (strain ATCC 27144 / PCC 6301 / SAUG 1402/1) (Anacystis nidulans).